The chain runs to 123 residues: Small ribosomal subunit protein uS12cz/uS12cy (123 aa).

This sequence belongs to the universal ribosomal protein uS12 family. As to quaternary structure, part of the 30S ribosomal subunit.

The protein resides in the plastid. It is found in the chloroplast. In terms of biological role, with S4 and S5 plays an important role in translational accuracy. Located at the interface of the 30S and 50S subunits. This Cucumis sativus (Cucumber) protein is Small ribosomal subunit protein uS12cz/uS12cy (rps12-A).